The primary structure comprises 838 residues: MAKPLTDSERQKQISVRGIAGLGDVAEVRKSFNRHLHFTLVKDRNVATPRDYFFALAHTVRDHLVGRWIRTQQHYYERDPKRIYYLSLEFYMGRTLQNTMVNLGLQTACDEATYQLGLDLEELEEIEEDAGLGNGGLGRLAACFLDSMATLGLAAYGYGIRYEFGIFNQKIVNGWQVEEADDWLRYGNPWEKARPEYMLPVHFYGRVEHTPNGVLWLDTQVVLAMPYDTPVPGYKNNTVNTMRLWSAKAPNDFKLKDFNVGDYIEAVLDRNLAENISRVLYPNDNFFEGKELRLKQEYFVVAATLQDIIRRFKSSKFGCRDPVRTCFETFPDKVAIQLNDTHPALSIPELMRILVDVEKVDWDKAWEITKKTCAYTNHTVLPEALERWPVSMFEKLLPRHLEIIYAINQRHLDHVAALFPGDVDRLRRMSVIEEGDCKRINMAHLCVIGSHAVNGVARIHSEIVKQSVFKDFYELEPEKFQNKTNGITPRRWLLLCNPGLAEIIVERIGEGFLTDLSQLKKLLSLVDDEAFIRDVAKVKQENKLKFSAQLEKEYKVKINPCSMFDVHVKRIHEYKRQLLNCLHIITLYNRIKKDPTKTFVPRTVMIGGKAAPGYHMAKMIIKLVTSIGDVVNHDPVVGDRLRVIFLENYRVSLAEKVIPAADLSQQISTAGTEASGTGNMKFMLNGALTIGTMDGANVEMAEEAGEENLFIFGMRVEDVEALDQKGYNAQEFYERLPELRQAVDQISSGFFSPKDPDCFKDVVNMLMYHDRFKVFADYEAYIQCQAQVDHLYRNPKDWTKKVIRNIACSGKFSSDRTITEYAREIWGVEPSDLQIPPP.

At A2 the chain carries N-acetylalanine. S15 is modified (phosphoserine). Residues D43, Y197, and R310 each coordinate AMP. Y197 is modified (phosphotyrosine). Residue Y473 is modified to Phosphotyrosine. S524 bears the Phosphoserine mark. K569 lines the pyridoxal 5'-phosphate pocket. Positions 677–678 (TG) are pyridoxal 5'-phosphate. N6-(pyridoxal phosphate)lysine is present on K681.

The protein belongs to the glycogen phosphorylase family. As to quaternary structure, homodimer. Dimers associate into a tetramer to form the enzymatically active phosphorylase A. Requires pyridoxal 5'-phosphate as cofactor. Post-translationally, phosphorylation of Ser-15 converts phosphorylase B (unphosphorylated) to phosphorylase A.

It carries out the reaction [(1-&gt;4)-alpha-D-glucosyl](n) + phosphate = [(1-&gt;4)-alpha-D-glucosyl](n-1) + alpha-D-glucose 1-phosphate. Activity of phosphorylase is controlled both by allosteric means (through the non-covalent binding of metabolites) and by covalent modification. Thus AMP allosterically activates, whereas ATP, ADP, and glucose-6-phosphate allosterically inhibit, phosphorylase B. Its function is as follows. Glycogen phosphorylase that regulates glycogen mobilization. Phosphorylase is an important allosteric enzyme in carbohydrate metabolism. Enzymes from different sources differ in their regulatory mechanisms and in their natural substrates. However, all known phosphorylases share catalytic and structural properties. This Rattus norvegicus (Rat) protein is Glycogen phosphorylase, brain form (Pygb).